The following is a 173-amino-acid chain: Protein tyrosine phosphatase type IVA 3 (173 aa).

Residues 8-161 (APVEVSYRHM…YRPKQRLRFK (154 aa)) enclose the Tyrosine-protein phosphatase domain. A disulfide bridge links C49 with C104. D72 acts as the Proton donor in catalysis. Catalysis depends on C104, which acts as the Phosphocysteine intermediate. Residue R110 participates in substrate binding. C170 is modified (cysteine methyl ester). C170 carries the S-farnesyl cysteine lipid modification. A propeptide spans 171–173 (CVM) (removed in mature form).

This sequence belongs to the protein-tyrosine phosphatase family. As to quaternary structure, interacts with tubulin. In terms of processing, farnesylated. Farnesylation is required for membrane targeting. Unfarnesylated forms are shifted into the nucleus. As to expression, present in the small intestine, where it is located in the differentiated epithelial cells of the villus but not in the proliferating crypt cells (at protein level). Expressed in heart and skeletal muscle, and at lower levels in lung, spleen and testis.

The protein localises to the cell membrane. Its subcellular location is the early endosome. It carries out the reaction O-phospho-L-tyrosyl-[protein] + H2O = L-tyrosyl-[protein] + phosphate. Inhibited by sodium orthovanadate and peroxovanadium compounds, and by pentamidine. Its function is as follows. Protein tyrosine phosphatase which stimulates progression from G1 into S phase during mitosis. Enhances cell proliferation, cell motility and invasive activity, and promotes cancer metastasis. May be involved in the progression of cardiac hypertrophy by inhibiting intracellular calcium mobilization in response to angiotensin II. The chain is Protein tyrosine phosphatase type IVA 3 (Ptp4a3) from Mus musculus (Mouse).